Consider the following 336-residue polypeptide: Galectin-12 (336 aa).

Galectin domains are found at residues 49 to 183 (YVTT…VGFL) and 212 to 336 (CSHA…CVHS).

In terms of tissue distribution, not widely expressed. Predominantly expressed in adipose tissue.

The protein localises to the nucleus. Functionally, binds lactose. May participate in the apoptosis of adipocytes. This is Galectin-12 (LGALS12) from Homo sapiens (Human).